A 544-amino-acid chain; its full sequence is Esterase P (544 aa).

A signal peptide spans 1-19 (MSIFKRLLCLTLLWIAALE). A glycan (N-linked (GlcNAc...) asparagine) is linked at Asn-75. Cys-83 and Cys-102 form a disulfide bridge. Asn-114 carries N-linked (GlcNAc...) asparagine glycosylation. Ser-206 (acyl-ester intermediate) is an active-site residue. Cys-258 and Cys-270 are oxidised to a cystine. N-linked (GlcNAc...) asparagine glycosylation is found at Asn-262 and Asn-456. His-466 acts as the Charge relay system in catalysis. Cysteines 514 and 535 form a disulfide.

It belongs to the type-B carboxylesterase/lipase family. As to quaternary structure, monomer.

The protein resides in the secreted. The enzyme catalyses a carboxylic ester + H2O = an alcohol + a carboxylate + H(+). This Drosophila melanogaster (Fruit fly) protein is Esterase P (Est-P).